Consider the following 130-residue polypeptide: Small ribosomal subunit protein uS9 (130 aa).

Residues 109-130 (RMKERKKYGLKGARRAPQFSKR) are disordered. Positions 111-130 (KERKKYGLKGARRAPQFSKR) are enriched in basic residues.

It belongs to the universal ribosomal protein uS9 family.

The sequence is that of Small ribosomal subunit protein uS9 from Listeria innocua serovar 6a (strain ATCC BAA-680 / CLIP 11262).